The sequence spans 739 residues: Adenosylcobalamin-dependent ribonucleoside-triphosphate reductase (739 aa).

Cysteine 119 and cysteine 419 are oxidised to a cystine. Positions 147–158 are effector region-1; it reads SMPFSFLFDELM. Residues 168–313 form an effector region-2 region; that stretch reads ARSNISQIPR…ICNLIGKAVV (146 aa). Active-site residues include cysteine 408 and glutamate 410. The segment at 565–626 is adenosylcobalamin-binding-1; sequence FHYGAYLIQR…NPNFASAGTV (62 aa). Residues 685 to 724 form an adenosylcobalamin-binding-2 region; the sequence is LQQAPKEPIDKETYEKRSQEITGNVEEVFSQLNSDVKDLE.

The protein belongs to the class II ribonucleoside-triphosphate reductase family. As to quaternary structure, monomer. It depends on adenosylcob(III)alamin as a cofactor.

It carries out the reaction a 2'-deoxyribonucleoside 5'-triphosphate + [thioredoxin]-disulfide + H2O = a ribonucleoside 5'-triphosphate + [thioredoxin]-dithiol. Its activity is regulated as follows. Allosterically regulated by ATP and dNTP. The protein is Adenosylcobalamin-dependent ribonucleoside-triphosphate reductase (rtpR) of Lactobacillus delbrueckii subsp. bulgaricus (strain ATCC BAA-365 / Lb-18).